The following is a 364-amino-acid chain: Probable dual-specificity RNA methyltransferase RlmN (364 aa).

Catalysis depends on Glu-107, which acts as the Proton acceptor. Residues 113–346 (HEYGNSVCVT…ATIRREQGSD (234 aa)) enclose the Radical SAM core domain. Cys-120 and Cys-351 are joined by a disulfide. Residues Cys-127, Cys-131, and Cys-134 each coordinate [4Fe-4S] cluster. S-adenosyl-L-methionine is bound by residues 177–178 (GE), Ser-209, 232–234 (SLH), and Asn-308. Cys-351 (S-methylcysteine intermediate) is an active-site residue.

Belongs to the radical SAM superfamily. RlmN family. [4Fe-4S] cluster serves as cofactor.

It is found in the cytoplasm. The catalysed reaction is adenosine(2503) in 23S rRNA + 2 reduced [2Fe-2S]-[ferredoxin] + 2 S-adenosyl-L-methionine = 2-methyladenosine(2503) in 23S rRNA + 5'-deoxyadenosine + L-methionine + 2 oxidized [2Fe-2S]-[ferredoxin] + S-adenosyl-L-homocysteine. It carries out the reaction adenosine(37) in tRNA + 2 reduced [2Fe-2S]-[ferredoxin] + 2 S-adenosyl-L-methionine = 2-methyladenosine(37) in tRNA + 5'-deoxyadenosine + L-methionine + 2 oxidized [2Fe-2S]-[ferredoxin] + S-adenosyl-L-homocysteine. Specifically methylates position 2 of adenine 2503 in 23S rRNA and position 2 of adenine 37 in tRNAs. Confers resistance to some classes of antibiotics. The polypeptide is Probable dual-specificity RNA methyltransferase RlmN (Staphylococcus epidermidis (strain ATCC 35984 / DSM 28319 / BCRC 17069 / CCUG 31568 / BM 3577 / RP62A)).